Here is a 311-residue protein sequence, read N- to C-terminus: Syndecan-1 (311 aa).

The first 22 residues, 1 to 22, serve as a signal peptide directing secretion; the sequence is MRRAALWLWLCALALRLQPALP. Residues 23–255 are Extracellular-facing; that stretch reads QIVAVNVPPE…SLLDRKEVLG (233 aa). Disordered regions lie at residues 29 to 59 and 152 to 184; these read VPPEDQDGSGDDSDNFSGSGTGALPDTLSRQ and SHPHGGMQPGLHETSAPTAPGQPDHQPPRVEGG. Residues 32 to 42 are compositionally biased toward acidic residues; it reads EDQDGSGDDSD. A glycan (O-linked (Xyl...) (chondroitin sulfate) serine) is linked at Ser-37. An N-linked (GlcNAc...) asparagine glycan is attached at Asn-43. O-linked (Xyl...) (heparan sulfate) serine glycans are attached at residues Ser-45 and Ser-47. O-linked (Xyl...) (chondroitin sulfate) serine glycans are attached at residues Ser-207 and Ser-217. A helical membrane pass occupies residues 256–276; sequence GVIAGGLVGLIFAVCLVAFML. Residues 277–311 are Cytoplasmic-facing; it reads YRMKKKDEGSYSLEEPKQANGGAYQKPTKQEEFYA. The tract at residues 285 to 311 is disordered; that stretch reads GSYSLEEPKQANGGAYQKPTKQEEFYA. Ser-286 is modified (phosphoserine).

This sequence belongs to the syndecan proteoglycan family. As to quaternary structure, interacts with CDCP1. Interacts (via C-terminus) with TIAM1 (via PDZ domain). Interacts with MDK. Shedding is enhanced by a number of factors such as heparanase, thrombin or EGF. Also by stress and wound healing. PMA-mediated shedding is inhibited by TIMP3.

It localises to the membrane. The protein resides in the secreted. The protein localises to the extracellular exosome. In terms of biological role, cell surface proteoglycan that contains both heparan sulfate and chondroitin sulfate and that links the cytoskeleton to the interstitial matrix. Regulates exosome biogenesis in concert with SDCBP and PDCD6IP. Able to induce its own expression in dental mesenchymal cells and also in the neighboring dental epithelial cells via an MSX1-mediated pathway. This Mus musculus (Mouse) protein is Syndecan-1.